Consider the following 164-residue polypeptide: ATP synthase subunit b (164 aa).

A helical membrane pass occupies residues 10 to 32 (SAAMLMLFVLMVYFLNKFLYTPF).

Belongs to the ATPase B chain family. In terms of assembly, F-type ATPases have 2 components, F(1) - the catalytic core - and F(0) - the membrane proton channel. F(1) has five subunits: alpha(3), beta(3), gamma(1), delta(1), epsilon(1). F(0) has three main subunits: a(1), b(2) and c(10-14). The alpha and beta chains form an alternating ring which encloses part of the gamma chain. F(1) is attached to F(0) by a central stalk formed by the gamma and epsilon chains, while a peripheral stalk is formed by the delta and b chains.

It localises to the cell inner membrane. Functionally, f(1)F(0) ATP synthase produces ATP from ADP in the presence of a proton or sodium gradient. F-type ATPases consist of two structural domains, F(1) containing the extramembraneous catalytic core and F(0) containing the membrane proton channel, linked together by a central stalk and a peripheral stalk. During catalysis, ATP synthesis in the catalytic domain of F(1) is coupled via a rotary mechanism of the central stalk subunits to proton translocation. In terms of biological role, component of the F(0) channel, it forms part of the peripheral stalk, linking F(1) to F(0). This Thermotoga maritima (strain ATCC 43589 / DSM 3109 / JCM 10099 / NBRC 100826 / MSB8) protein is ATP synthase subunit b.